The chain runs to 259 residues: Uridylate kinase (259 aa).

10 to 13 (KLSG) contacts ATP. Gly52 is a UMP binding site. Residues Gly53 and Arg57 each contribute to the ATP site. UMP is bound by residues Asp72 and 134–141 (NGQPFLTT). Tyr168 and Asp171 together coordinate ATP. The interval 236 to 259 (ISSSPEKSEEFGNEVLASPAESTA) is disordered.

It belongs to the UMP kinase family. As to quaternary structure, homohexamer.

It is found in the cytoplasm. It carries out the reaction UMP + ATP = UDP + ADP. It participates in pyrimidine metabolism; CTP biosynthesis via de novo pathway; UDP from UMP (UMPK route): step 1/1. Inhibited by UTP. Functionally, catalyzes the reversible phosphorylation of UMP to UDP. This chain is Uridylate kinase, found in Frankia casuarinae (strain DSM 45818 / CECT 9043 / HFP020203 / CcI3).